The chain runs to 557 residues: MAFNRRSKNITQGISRSPNRSMYYAMGYEKEDFDKPMVGVANGHSTITPCNSGLQKLADIAIKTIKDSGGNPQVFGTPTISDGMSMGTEGMKYSLISREVIADCIETAVNGQWMDGVLVIGGCDKNMPGGMIAMLRTNVPSIYVYGGTIKPGNWKGKDLTIVSAFEAVGEFTAGRMSQEDFDGIERNACPSAGSCGGMYTANTMSSSFEALGLALPYSSTMANPDDEKVGSAAESARVLIEAIKNDLKPRDIVTRKAIENAVAVIMATGGSTNAVLHFLAIAHAAEVEWTIDDFERMRKKVPVICDLKPSGKYVATDLHKAGGIPQVMKVLLDAGLLHGDCMTITGQTVAEALAHIPSVPRADQHVIHPIKDALYEQGHLAILKGNLSPEGCVAKITGLKNPVITGPARVFDDEYSAMDAIMANKIVAGDVLVMRYLGPKGGPGMPEMLAPTSALVGQGLGESVGLITDGRFSGGTWGMVVGHVSPEAFVGGLIGLVEEGDSVTIDAHKLLIQLNVPEEEIARRRANWKQPAPRYTRGVLSKFAALASSASKGAVTG.

A [2Fe-2S] cluster-binding site is contributed by Cys-50. Asp-82 lines the Mg(2+) pocket. Cys-123 is a [2Fe-2S] cluster binding site. Mg(2+)-binding residues include Asp-124 and Lys-125. Lys-125 bears the N6-carboxylysine mark. Cys-195 contributes to the [2Fe-2S] cluster binding site. A Mg(2+)-binding site is contributed by Glu-447. Ser-473 (proton acceptor) is an active-site residue.

Belongs to the IlvD/Edd family. As to quaternary structure, homodimer. [2Fe-2S] cluster is required as a cofactor. Mg(2+) serves as cofactor.

The catalysed reaction is (2R)-2,3-dihydroxy-3-methylbutanoate = 3-methyl-2-oxobutanoate + H2O. The enzyme catalyses (2R,3R)-2,3-dihydroxy-3-methylpentanoate = (S)-3-methyl-2-oxopentanoate + H2O. It functions in the pathway amino-acid biosynthesis; L-isoleucine biosynthesis; L-isoleucine from 2-oxobutanoate: step 3/4. It participates in amino-acid biosynthesis; L-valine biosynthesis; L-valine from pyruvate: step 3/4. Functionally, functions in the biosynthesis of branched-chain amino acids. Catalyzes the dehydration of (2R,3R)-2,3-dihydroxy-3-methylpentanoate (2,3-dihydroxy-3-methylvalerate) into 2-oxo-3-methylpentanoate (2-oxo-3-methylvalerate) and of (2R)-2,3-dihydroxy-3-methylbutanoate (2,3-dihydroxyisovalerate) into 2-oxo-3-methylbutanoate (2-oxoisovalerate), the penultimate precursor to L-isoleucine and L-valine, respectively. In Janthinobacterium sp. (strain Marseille) (Minibacterium massiliensis), this protein is Dihydroxy-acid dehydratase.